The chain runs to 332 residues: 4-hydroxy-3-methylbut-2-enyl diphosphate reductase (332 aa).

C34 is a [4Fe-4S] cluster binding site. The (2E)-4-hydroxy-3-methylbut-2-enyl diphosphate site is built by H63 and H96. Dimethylallyl diphosphate is bound by residues H63 and H96. Isopentenyl diphosphate is bound by residues H63 and H96. [4Fe-4S] cluster is bound at residue C118. H146 lines the (2E)-4-hydroxy-3-methylbut-2-enyl diphosphate pocket. H146 provides a ligand contact to dimethylallyl diphosphate. Isopentenyl diphosphate is bound at residue H146. E148 acts as the Proton donor in catalysis. T186 serves as a coordination point for (2E)-4-hydroxy-3-methylbut-2-enyl diphosphate. Residue C216 coordinates [4Fe-4S] cluster. 4 residues coordinate (2E)-4-hydroxy-3-methylbut-2-enyl diphosphate: S244, S245, N246, and S289. S244, S245, N246, and S289 together coordinate dimethylallyl diphosphate. 4 residues coordinate isopentenyl diphosphate: S244, S245, N246, and S289.

The protein belongs to the IspH family. It depends on [4Fe-4S] cluster as a cofactor.

The catalysed reaction is isopentenyl diphosphate + 2 oxidized [2Fe-2S]-[ferredoxin] + H2O = (2E)-4-hydroxy-3-methylbut-2-enyl diphosphate + 2 reduced [2Fe-2S]-[ferredoxin] + 2 H(+). It catalyses the reaction dimethylallyl diphosphate + 2 oxidized [2Fe-2S]-[ferredoxin] + H2O = (2E)-4-hydroxy-3-methylbut-2-enyl diphosphate + 2 reduced [2Fe-2S]-[ferredoxin] + 2 H(+). It functions in the pathway isoprenoid biosynthesis; dimethylallyl diphosphate biosynthesis; dimethylallyl diphosphate from (2E)-4-hydroxy-3-methylbutenyl diphosphate: step 1/1. The protein operates within isoprenoid biosynthesis; isopentenyl diphosphate biosynthesis via DXP pathway; isopentenyl diphosphate from 1-deoxy-D-xylulose 5-phosphate: step 6/6. Functionally, catalyzes the conversion of 1-hydroxy-2-methyl-2-(E)-butenyl 4-diphosphate (HMBPP) into a mixture of isopentenyl diphosphate (IPP) and dimethylallyl diphosphate (DMAPP). Acts in the terminal step of the DOXP/MEP pathway for isoprenoid precursor biosynthesis. The sequence is that of 4-hydroxy-3-methylbut-2-enyl diphosphate reductase from Mycobacterium ulcerans (strain Agy99).